Reading from the N-terminus, the 506-residue chain is Anaerobic nitric oxide reductase transcription regulator NorR (506 aa).

Asp-57 carries the 4-aspartylphosphate modification. In terms of domain architecture, Sigma-54 factor interaction spans 187–416 (MIGLSPAMTQ…LEHAIHRAVV (230 aa)). Residues 215-222 (GETGTGKE) and 278-287 (ADNGTLFLDE) each bind ATP. Positions 481-500 (WAASARALETDVANLHRLAK) form a DNA-binding region, H-T-H motif.

It participates in nitrogen metabolism; nitric oxide reduction. In terms of biological role, required for the expression of anaerobic nitric oxide (NO) reductase, acts as a transcriptional activator for at least the norVW operon. Activation also requires sigma-54. This chain is Anaerobic nitric oxide reductase transcription regulator NorR, found in Salmonella newport (strain SL254).